A 183-amino-acid chain; its full sequence is Dual-action ribosomal maturation protein DarP (183 aa).

It belongs to the DarP family.

The protein resides in the cytoplasm. Its function is as follows. Member of a network of 50S ribosomal subunit biogenesis factors which assembles along the 30S-50S interface, preventing incorrect 23S rRNA structures from forming. Promotes peptidyl transferase center (PTC) maturation. This Citrobacter koseri (strain ATCC BAA-895 / CDC 4225-83 / SGSC4696) protein is Dual-action ribosomal maturation protein DarP.